Reading from the N-terminus, the 150-residue chain is Peptide deformylase 2 (150 aa).

Fe cation is bound by residues cysteine 89 and histidine 131. Glutamate 132 is an active-site residue. Histidine 135 contributes to the Fe cation binding site.

It belongs to the polypeptide deformylase family. Fe(2+) is required as a cofactor.

The enzyme catalyses N-terminal N-formyl-L-methionyl-[peptide] + H2O = N-terminal L-methionyl-[peptide] + formate. Functionally, removes the formyl group from the N-terminal Met of newly synthesized proteins. Requires at least a dipeptide for an efficient rate of reaction. N-terminal L-methionine is a prerequisite for activity but the enzyme has broad specificity at other positions. This is Peptide deformylase 2 from Clostridium acetobutylicum (strain ATCC 824 / DSM 792 / JCM 1419 / IAM 19013 / LMG 5710 / NBRC 13948 / NRRL B-527 / VKM B-1787 / 2291 / W).